The sequence spans 195 residues: Peptidyl-tRNA hydrolase (195 aa).

Residue Tyr17 coordinates tRNA. Catalysis depends on His22, which acts as the Proton acceptor. The tRNA site is built by Tyr68, Asn70, and Asn116.

It belongs to the PTH family. Monomer.

It localises to the cytoplasm. It carries out the reaction an N-acyl-L-alpha-aminoacyl-tRNA + H2O = an N-acyl-L-amino acid + a tRNA + H(+). Hydrolyzes ribosome-free peptidyl-tRNAs (with 1 or more amino acids incorporated), which drop off the ribosome during protein synthesis, or as a result of ribosome stalling. Functionally, catalyzes the release of premature peptidyl moieties from peptidyl-tRNA molecules trapped in stalled 50S ribosomal subunits, and thus maintains levels of free tRNAs and 50S ribosomes. This chain is Peptidyl-tRNA hydrolase, found in Shewanella frigidimarina (strain NCIMB 400).